A 133-amino-acid polypeptide reads, in one-letter code: Stage III sporulation protein AD (133 aa).

The next 3 helical transmembrane spans lie at 2–22 (QIDI…SLIV), 29–49 (FAFL…VDQI), and 108–128 (ILIL…ILGL).

It localises to the cell membrane. This Bacillus subtilis (strain 168) protein is Stage III sporulation protein AD (spoIIIAD).